The chain runs to 237 residues: MPARLETCISDLDCASSSGSDLSGFLTDEEDCARLQQAASASGPPAPARRGAPNISRASEVPGAQDDEQERRRRRGRTRVRSEALLHSLRRSRRVKANDRERNRMHNLNAALDALRSVLPSFPDDTKLTKIETLRFAYNYIWALAETLRLADQGLPGGGARERLLPPQCVPCLPGPPSPASDAESWGSGAAAASPLSDPSSPAASEDFTYRPGDPVFSFPSLPKDLLHTTPCFIPYH.

The tract at residues 35–83 is disordered; that stretch reads LQQAASASGPPAPARRGAPNISRASEVPGAQDDEQERRRRRGRTRVRSE. The span at 38 to 53 shows a compositional bias: low complexity; that stretch reads AASASGPPAPARRGAP. One can recognise a bHLH domain in the interval 92–144; the sequence is SRRVKANDRERNRMHNLNAALDALRSVLPSFPDDTKLTKIETLRFAYNYIWAL. Positions 175-209 are disordered; the sequence is GPPSPASDAESWGSGAAAASPLSDPSSPAASEDFT. Positions 180–207 are enriched in low complexity; it reads ASDAESWGSGAAAASPLSDPSSPAASED.

Efficient DNA binding requires dimerization with another bHLH protein. As to expression, expression restricted to the embryonic nervous system.

Its subcellular location is the nucleus. In terms of biological role, acts as a transcriptional regulator. Involved in the initiation of neuronal differentiation. Activates transcription by binding to the E box (5'-CANNTG-3'). Associates with chromatin to enhancer regulatory elements in genes encoding key transcriptional regulators of neurogenesis. In Homo sapiens (Human), this protein is Neurogenin-1 (NEUROG1).